Here is a 586-residue protein sequence, read N- to C-terminus: CTP synthase 2 (586 aa).

The Glutamine amidotransferase type-1 domain maps to 300-554; sequence SIALVGKYTK…LAATGNLNAY (255 aa). Residues Cys-399, His-526, and Glu-528 each act as for GATase activity in the active site. A disordered region spans residues 563–586; the sequence is SSDRYSDASDDSFSEPRIAELEIS. Phosphoserine is present on residues Ser-568, Ser-571, and Ser-574.

Belongs to the CTP synthase family.

It carries out the reaction UTP + L-glutamine + ATP + H2O = CTP + L-glutamate + ADP + phosphate + 2 H(+). The protein operates within pyrimidine metabolism; CTP biosynthesis via de novo pathway; CTP from UDP: step 2/2. In terms of biological role, catalyzes the ATP-dependent amination of UTP to CTP with either L-glutamine or ammonia as the source of nitrogen. Constitutes the rate-limiting enzyme in the synthesis of cytosine nucleotides. This Homo sapiens (Human) protein is CTP synthase 2 (CTPS2).